Consider the following 497-residue polypeptide: Pseudooxynicotine dehydrogenase (497 aa).

Positions 1–43 form a signal peptide, tat-type signal; that stretch reads MANDKGDISKDGVSRRKFLGGAVIGAAAAAGVGSQILSLSATA. Residues Ala-70, Glu-89, Arg-97, Trp-114, Val-286, Ser-462, and Ile-472 each contribute to the FAD site.

This sequence belongs to the flavin monoamine oxidase family. In terms of assembly, homodimer. It depends on FAD as a cofactor. Post-translationally, predicted to be exported by the Tat system. The position of the signal peptide cleavage has not been experimentally proven.

Its subcellular location is the periplasm. It carries out the reaction pseudooxynicotine + 2 Fe(III)-[cytochrome c] + H2O = 4-oxo-4-(pyridin-3-yl)butanal + methylamine + 2 Fe(II)-[cytochrome c] + 2 H(+). The protein operates within alkaloid degradation; nicotine degradation. Strongly inhibited by Ag(+), Co(2+), Cu(2+) and Hg(2+). Its function is as follows. Involved in nicotine degradation. Catalyzes the deamination of pseudooxynicotine to 3-succinoylsemialdehyde-pyridine. The protein is Pseudooxynicotine dehydrogenase of Pseudomonas sp.